The sequence spans 95 residues: Small ribosomal subunit protein bS6 (95 aa).

This sequence belongs to the bacterial ribosomal protein bS6 family.

Its function is as follows. Binds together with bS18 to 16S ribosomal RNA. This chain is Small ribosomal subunit protein bS6, found in Clostridium kluyveri (strain NBRC 12016).